Reading from the N-terminus, the 189-residue chain is Casparian strip membrane protein 2 (189 aa).

Positions 1 to 21 are disordered; that stretch reads MKVSTIESGEISKGASSPRKG. Residues 1-25 are Cytoplasmic-facing; sequence MKVSTIESGEISKGASSPRKGMKRG. Residues 26–46 traverse the membrane as a helical segment; it reads LSIMDFILRIFAAMSTLGSAL. Topologically, residues 47 to 73 are extracellular; it reads SMGTAKQTMPFATRFVRFKVSFHDLPT. Residues 74-94 traverse the membrane as a helical segment; that stretch reads FLFFVTANSIVCGYLALSLVL. The Cytoplasmic portion of the chain corresponds to 95 to 108; it reads SFFHIVRTISVKSR. Residues 109–129 traverse the membrane as a helical segment; it reads ILLVFLDTVMFGLLTSGASAA. Residues 130–163 are Extracellular-facing; that stretch reads AAIVYVAHYGNPSANWFPFCQQYNSFCGRISGSL. The helical transmembrane segment at 164–184 threads the bilayer; sequence VGSFIAVVIFMILILMSGISI. At 185 to 189 the chain is on the cytoplasmic side; it reads SKSKH.

Belongs to the Casparian strip membrane proteins (CASP) family. In terms of assembly, homodimer and heterodimers.

It localises to the cell membrane. Regulates membrane-cell wall junctions and localized cell wall deposition. Required for establishment of the Casparian strip membrane domain (CSD) and the subsequent formation of Casparian strips, a cell wall modification of the root endodermis that determines an apoplastic barrier between the intraorganismal apoplasm and the extraorganismal apoplasm and prevents lateral diffusion. This Medicago truncatula (Barrel medic) protein is Casparian strip membrane protein 2.